Consider the following 283-residue polypeptide: Transcription factor bHLH104 (283 aa).

Positions 96-134 (VEINSGSSGGAVKEEQEHLDDDCSRKRARTGSCSRGGGT) are disordered. A compositionally biased stretch (basic and acidic residues) spans 107–120 (VKEEQEHLDDDCSR). The bHLH domain maps to 130–181 (RGGGTKACRERLRREKLNERFMDLSSVLEPGRTPKTDKPAILDDAIRILNQL).

As to quaternary structure, homodimer. Interacts with BTS and BHLH47/PYE.

It localises to the nucleus. The sequence is that of Transcription factor bHLH104 (BHLH104) from Arabidopsis thaliana (Mouse-ear cress).